Reading from the N-terminus, the 309-residue chain is Olfactory receptor 2G3 (309 aa).

At 1-25 (MGLGNESSLMDFILLGFSDHPRLEA) the chain is on the extracellular side. Asn5 carries an N-linked (GlcNAc...) asparagine glycan. The chain crosses the membrane as a helical span at residues 26–49 (VLFVFVLFFYLLTLVGNFTIIIIS). Topologically, residues 50 to 57 (YLDPPLHT) are cytoplasmic. A helical transmembrane segment spans residues 58-79 (PMYFFLSNLSLLDICFTTSLAP). Over 80–100 (QTLVNLQRPKKTITYGGCVAQ) the chain is Extracellular. A disulfide bond links Cys97 and Cys189. A helical membrane pass occupies residues 101–120 (LYISLALGSTECILLADMAL). Topologically, residues 121–139 (DRYIAVCKPLHYVVIMNPR) are cytoplasmic. A helical transmembrane segment spans residues 140-158 (LCQQLASISWLSGLASSLI). Topologically, residues 159 to 195 (HATFTLQLPLCGNHRLDHFICEVPALLKLACVDTTVN) are extracellular. The chain crosses the membrane as a helical span at residues 196–219 (ELVLFVVSVLFVVIPPALISISYG). Topologically, residues 220–236 (FITQAVLRIKSVEARHK) are cytoplasmic. Residues 237–259 (AFSTCSSHLTVVIIFYGTIIYVY) form a helical membrane-spanning segment. Residues 260–272 (LQPSDSYAQDQGK) are Extracellular-facing. The chain crosses the membrane as a helical span at residues 273-292 (FISLFYTMVTPTLNPIIYTL). Topologically, residues 293 to 309 (RNKDMKEALRKLLSGKL) are cytoplasmic.

The protein belongs to the G-protein coupled receptor 1 family.

It is found in the cell membrane. Odorant receptor. This is Olfactory receptor 2G3 (OR2G3) from Homo sapiens (Human).